The chain runs to 268 residues: UPF0294 protein ETA_26410 (268 aa).

The protein belongs to the UPF0294 family.

It is found in the cytoplasm. In Erwinia tasmaniensis (strain DSM 17950 / CFBP 7177 / CIP 109463 / NCPPB 4357 / Et1/99), this protein is UPF0294 protein ETA_26410.